Consider the following 644-residue polypeptide: Threonine--tRNA ligase (644 aa).

One can recognise a TGS domain in the interval 1–61; sequence MVAITLPDGS…AHDAKVEIVT (61 aa). The catalytic stretch occupies residues 242–533; the sequence is DHRKIGKALN…LIENYAGWMP (292 aa). Zn(2+)-binding residues include Cys-333, His-384, and His-510.

The protein belongs to the class-II aminoacyl-tRNA synthetase family. In terms of assembly, homodimer. Requires Zn(2+) as cofactor.

The protein localises to the cytoplasm. The enzyme catalyses tRNA(Thr) + L-threonine + ATP = L-threonyl-tRNA(Thr) + AMP + diphosphate + H(+). Its function is as follows. Catalyzes the attachment of threonine to tRNA(Thr) in a two-step reaction: L-threonine is first activated by ATP to form Thr-AMP and then transferred to the acceptor end of tRNA(Thr). Also edits incorrectly charged L-seryl-tRNA(Thr). This Psychrobacter cryohalolentis (strain ATCC BAA-1226 / DSM 17306 / VKM B-2378 / K5) protein is Threonine--tRNA ligase.